The following is a 257-amino-acid chain: Small ribosomal subunit protein eS1 (257 aa).

The disordered stretch occupies residues G237 to V257. Over residues D239 to D248 the composition is skewed to basic and acidic residues.

It belongs to the eukaryotic ribosomal protein eS1 family. Component of the small ribosomal subunit. Mature ribosomes consist of a small (40S) and a large (60S) subunit. The 40S subunit contains about 33 different proteins and 1 molecule of RNA (18S). The 60S subunit contains about 49 different proteins and 3 molecules of RNA (28S, 5.8S and 5S).

It localises to the cytoplasm. In Caenorhabditis elegans, this protein is Small ribosomal subunit protein eS1.